We begin with the raw amino-acid sequence, 117 residues long: MRVKRGVAAKRRHKKYLKMAKGFRGSGSTLYRTARERVERSLCMAYVGRKLRKRDMRKLWIQRINAAARLNGMSYSRLIHGLSTAGVTLNRKVLADLAVNDAPAFAKVVEIAKAQVS.

It belongs to the bacterial ribosomal protein bL20 family.

Functionally, binds directly to 23S ribosomal RNA and is necessary for the in vitro assembly process of the 50S ribosomal subunit. It is not involved in the protein synthesizing functions of that subunit. The protein is Large ribosomal subunit protein bL20 of Maridesulfovibrio salexigens (strain ATCC 14822 / DSM 2638 / NCIMB 8403 / VKM B-1763) (Desulfovibrio salexigens).